The sequence spans 389 residues: Fructose-1,6-bisphosphate aldolase/phosphatase (389 aa).

Aspartate 17 serves as the catalytic Proton acceptor; for FBP phosphatase activity. Positions 17, 24, 57, and 58 each coordinate Mg(2+). Histidine 24 lines the beta-D-fructose 1,6-bisphosphate pocket. Histidine 24 is a binding site for dihydroxyacetone phosphate. Tyrosine 95 contributes to the beta-D-fructose 1,6-bisphosphate binding site. Residue glutamine 99 coordinates Mg(2+). A beta-D-fructose 1,6-bisphosphate-binding site is contributed by 108 to 109; the sequence is GN. Aspartate 136 is a binding site for Mg(2+). Lysine 137 lines the beta-D-fructose 1,6-bisphosphate pocket. Lysine 137 serves as a coordination point for dihydroxyacetone phosphate. Tyrosine 233 (proton donor/acceptor; for FBP aldolase activity) is an active-site residue. The Mg(2+) site is built by lysine 236, aspartate 237, and aspartate 238. The active-site Schiff-base intermediate with DHAP; for FBP aldolase activity is the lysine 236. Beta-D-fructose 1,6-bisphosphate-binding positions include 246–247, arginine 270, aspartate 291, and tyrosine 352; that span reads QS. 2 residues coordinate dihydroxyacetone phosphate: arginine 270 and aspartate 291.

Belongs to the FBP aldolase/phosphatase family. In terms of assembly, homooctamer; dimer of tetramers. Mg(2+) serves as cofactor.

It catalyses the reaction beta-D-fructose 1,6-bisphosphate + H2O = beta-D-fructose 6-phosphate + phosphate. It carries out the reaction beta-D-fructose 1,6-bisphosphate = D-glyceraldehyde 3-phosphate + dihydroxyacetone phosphate. Its pathway is carbohydrate biosynthesis; gluconeogenesis. Catalyzes two subsequent steps in gluconeogenesis: the aldol condensation of dihydroxyacetone phosphate (DHAP) and glyceraldehyde-3-phosphate (GA3P) to fructose-1,6-bisphosphate (FBP), and the dephosphorylation of FBP to fructose-6-phosphate (F6P). The chain is Fructose-1,6-bisphosphate aldolase/phosphatase from Methanocaldococcus jannaschii (strain ATCC 43067 / DSM 2661 / JAL-1 / JCM 10045 / NBRC 100440) (Methanococcus jannaschii).